The chain runs to 366 residues: MQTLKVDLGERSYPIHIGEGLLDQPELLAPHIHGRQVAIISNETVAPLYLERLTRSLAQFSVVSVVLPDGEAFKNWETLQLIFDGLLTARHDRRTTVIALGGGVIGDMAGFAAACYQRGVDFIQIPTTLLSQVDSSVGGKTGINHPLGKNMVGAFYQPNVVLIDTASLKTLPARELSAGLAEVIKYGLICDEPFLTWLEDNVDALRALDQTALTYAIERSCAAKAAVVGADEKETGVRATLNLGHTFGHAIETHMGYGVWLHGEAVAAGTVMALEMSARLGWISEQERDRGIRLFQRAGLPVIPPEEMTEADFLEHMAIDKKVIDGRLRLVLLRRMGEAVVTDDYPKEVLQATLGADYRALAQLKG.

Residues 69–74 (DGEAFK), 103–107 (GVIGD), 127–128 (TT), K140, and K149 each bind NAD(+). Zn(2+) is bound by residues E182, H245, and H262.

Belongs to the sugar phosphate cyclases superfamily. Dehydroquinate synthase family. The cofactor is Co(2+). Zn(2+) is required as a cofactor. NAD(+) serves as cofactor.

The protein localises to the cytoplasm. It catalyses the reaction 7-phospho-2-dehydro-3-deoxy-D-arabino-heptonate = 3-dehydroquinate + phosphate. It functions in the pathway metabolic intermediate biosynthesis; chorismate biosynthesis; chorismate from D-erythrose 4-phosphate and phosphoenolpyruvate: step 2/7. Its function is as follows. Catalyzes the conversion of 3-deoxy-D-arabino-heptulosonate 7-phosphate (DAHP) to dehydroquinate (DHQ). The polypeptide is 3-dehydroquinate synthase (Pseudomonas fluorescens (strain Pf0-1)).